We begin with the raw amino-acid sequence, 876 residues long: uncharacterized protein (876 aa).

A compositionally biased stretch (basic and acidic residues) spans 37 to 48 (DEDKSNNDDRRS). 4 disordered regions span residues 37-67 (DEDK…KGSN), 112-155 (DESG…RNIK), 226-254 (KKKS…TKSQ), and 330-353 (MMMD…SRSI). Phosphoserine occurs at positions 48 and 51. Low complexity predominate over residues 49–58 (LASILDSSSS). Polar residues predominate over residues 115-131 (GFTSDNNADYFSGNSYS). 4 positions are modified to phosphoserine: serine 360, serine 510, serine 552, and serine 577. The tract at residues 490–513 (PEVTKQKNTSGPKPGFSHSKSADA) is disordered. 2 disordered regions span residues 661–728 (ITGG…RSPQ) and 750–876 (RHSL…FGRL). A compositionally biased stretch (basic residues) spans 689–699 (SKSKSRSSSKS). Low complexity predominate over residues 717–726 (SSASASRSRS). The residue at position 775 (serine 775) is a Phosphoserine. 2 stretches are compositionally biased toward low complexity: residues 794 to 808 (NKDS…SSSL) and 842 to 854 (FSFF…SPSS).

This is an uncharacterized protein from Saccharomyces cerevisiae (strain ATCC 204508 / S288c) (Baker's yeast).